Reading from the N-terminus, the 421-residue chain is ATP-dependent RNA helicase RhlB (421 aa).

The Q motif motif lies at 9–37 (QKFSDFALHPKVVEALEKKGFHNCTPIQA). Residues 40-219 (LPLTLAGRDV…FEQMNNAEYI (180 aa)) enclose the Helicase ATP-binding domain. Residue 53 to 60 (AQTGTGKT) coordinates ATP. The DEAD box signature appears at 165-168 (DEAD). Residues 245 to 390 (RLLQTLIEEE…VSKYNPDALM (146 aa)) form the Helicase C-terminal domain. A disordered region spans residues 392–421 (DLPKPLRLTRPRTGNGPRRTGAPRNRRRSG). Residues 402 to 414 (PRTGNGPRRTGAP) are compositionally biased toward low complexity.

It belongs to the DEAD box helicase family. RhlB subfamily. As to quaternary structure, component of the RNA degradosome, which is a multiprotein complex involved in RNA processing and mRNA degradation.

It localises to the cytoplasm. The catalysed reaction is ATP + H2O = ADP + phosphate + H(+). In terms of biological role, DEAD-box RNA helicase involved in RNA degradation. Has RNA-dependent ATPase activity and unwinds double-stranded RNA. The polypeptide is ATP-dependent RNA helicase RhlB (Escherichia coli O157:H7 (strain EC4115 / EHEC)).